The chain runs to 865 residues: cGMP-specific 3',5'-cyclic phosphodiesterase (865 aa).

Ser92 carries the phosphoserine modification. GAF domains follow at residues 154-304 and 336-493; these read DVTA…GIVL and SLEV…GLGI. The region spanning 526 to 850 is the PDEase domain; that stretch reads ETRELQSLAA…QKWQALAEQQ (325 aa). His603 acts as the Proton donor in catalysis. 4 residues coordinate Zn(2+): His607, His643, Asp644, and Asp754. Asp644 is a binding site for Mg(2+). Gln807 lines the 3',5'-cyclic GMP pocket.

It belongs to the cyclic nucleotide phosphodiesterase family. The cofactor is Zn(2+). Requires Mg(2+) as cofactor. Phosphorylation is regulated by binding of cGMP to the two allosteric sites. Phosphorylation by PRKG1 leads to its activation.

The enzyme catalyses 3',5'-cyclic GMP + H2O = GMP + H(+). It participates in purine metabolism; 3',5'-cyclic GMP degradation; GMP from 3',5'-cyclic GMP: step 1/1. Most potently inhibited by zaprinast and dipyridamole. In terms of biological role, plays a role in signal transduction by regulating the intracellular concentration of cyclic nucleotides. This phosphodiesterase catalyzes the specific hydrolysis of cGMP to 5'-GMP. Specifically regulates nitric-oxide-generated cGMP. This is cGMP-specific 3',5'-cyclic phosphodiesterase (PDE5A) from Bos taurus (Bovine).